The sequence spans 623 residues: Leucine-rich repeat, immunoglobulin-like domain and transmembrane domain-containing protein 1 (623 aa).

Positions 1 to 21 (MWVALGMLWLLALGGPHQAWS) are cleaved as a signal peptide. An LRRNT domain is found at 22 to 59 (FCPSQCSCSLHILSDGSKARTVVCSDPDLTLPPASIPP). Residues 22–526 (FCPSQCSCSL…EVVDAEGTQR (505 aa)) lie on the Lumenal side of the membrane. LRR repeat units follow at residues 60 to 81 (DTCKLRLERTAIRRVPGETFRP), 84 to 105 (RLEQLWLPYNALSELSTLMLRG), 108 to 128 (RLRELRLPGNHLVTFPWAALK), 132 to 153 (QLQLLDLQANRLSTLPPEAVHF), and 156 to 177 (NLTFLDLSNNQLMRLPEELLDT). Asn156 is a glycosylation site (N-linked (GlcNAc...) asparagine). An LRRCT domain is found at 201–253 (NPWVCDCRLYDLVHLLDGWASNLIFIEARLRCGSPRSLAGVAFSQLELRKCQS). In terms of domain architecture, Ig-like C2-type spans 266–332 (PLGSTVLLRC…SGDYICQAKN (67 aa)). A disulfide bond links Cys275 and Cys328. N-linked (GlcNAc...) asparagine glycosylation is found at Asn296 and Asn455. The Fibronectin type-III domain maps to 430 to 518 (MVRSLKVVGD…QCVIFSTDEV (89 aa)). Residues 525–548 (QRLINMVVISVAAIIALPPTLLVC) form an LRR 6 repeat. The helical transmembrane segment at 527–547 (LINMVVISVAAIIALPPTLLV) threads the bilayer. Residues 548–623 (CCGALRRRCH…GGRRINEYFC (76 aa)) are Cytoplasmic-facing.

Homodimer. Interacts with LRIT2; may form a heterodimer with LRIT2. Interacts (via its N-terminal extracellular domain) with metabotropic glutamate receptor GRM6. Interacts (via its extreme C-terminus) with the scaffold protein FRMPD2 (via the third PDZ domain); the interaction leads to their colocalization in photoreceptor synapses. As to expression, retina, outer segments of photoreceptor cells.

The protein localises to the endoplasmic reticulum membrane. Its subcellular location is the cell projection. The protein resides in the dendrite. Photoreceptor synaptic protein essential for normal vision. Involved in synapse formation in cone photoreceptor cells. The sequence is that of Leucine-rich repeat, immunoglobulin-like domain and transmembrane domain-containing protein 1 (Lrit1) from Rattus norvegicus (Rat).